We begin with the raw amino-acid sequence, 344 residues long: Anthranilate phosphoribosyltransferase (344 aa).

Residues Gly-80, Gly-83 to Asp-84, Thr-88, Asn-90 to Thr-93, Lys-108 to Ser-116, and Ser-120 each bind 5-phospho-alpha-D-ribose 1-diphosphate. Gly-80 lines the anthranilate pocket. Position 92 (Ser-92) interacts with Mg(2+). Anthranilate is bound at residue Asn-111. Arg-166 is an anthranilate binding site. Mg(2+) is bound by residues Asp-225 and Glu-226.

Belongs to the anthranilate phosphoribosyltransferase family. Homodimer. Requires Mg(2+) as cofactor.

It carries out the reaction N-(5-phospho-beta-D-ribosyl)anthranilate + diphosphate = 5-phospho-alpha-D-ribose 1-diphosphate + anthranilate. The protein operates within amino-acid biosynthesis; L-tryptophan biosynthesis; L-tryptophan from chorismate: step 2/5. Catalyzes the transfer of the phosphoribosyl group of 5-phosphorylribose-1-pyrophosphate (PRPP) to anthranilate to yield N-(5'-phosphoribosyl)-anthranilate (PRA). In Legionella pneumophila (strain Lens), this protein is Anthranilate phosphoribosyltransferase.